The following is a 209-amino-acid chain: Large ribosomal subunit protein uL3 (209 aa).

A disordered region spans residues 118–150 (GFQGAIKRHGQSRGPMTHGSRYHRRPGSMGPVD).

Belongs to the universal ribosomal protein uL3 family. As to quaternary structure, part of the 50S ribosomal subunit. Forms a cluster with proteins L14 and L19.

One of the primary rRNA binding proteins, it binds directly near the 3'-end of the 23S rRNA, where it nucleates assembly of the 50S subunit. The polypeptide is Large ribosomal subunit protein uL3 (Bacillus pumilus (strain SAFR-032)).